The following is a 1315-amino-acid chain: MSTVLVRRKERRQPPQMPRGEILLESPPELPEVVTNSFQNVLMYLPMAAGSAAMVFTFLNHRNTLQLVAGGMFALSMFGMMFGQLSQQSGERKTKLNSARRDYLRYLGQVRQRVRKAAKQQREALEWNNPAPGRLWSMVMSPRLWERRSSDADFAQVRIGAGPQRLAVQLIPPETKPVEDLEPMSAGALRRFLRAHSTVPDLPVAISLRSFARILPDGDPKAVYGMVRALIMQLAAFHSPDDVRITVCASRERMPQWQWMKWLPHSLHPTEYDAAGQVRLLTHSLVELESMLGPEIKDRGMFGASRAPAEPFHLVIVDGGQASYDSQIASDGIDGVCVIDLTGSVAETNEATMLRLRVTPERVYVVKRDRAGKEVLSSVGRPDQASIAEAEALARQLAPFRTSAADEPEEDVLSANMTLTSLLHIDNPYNLDPAVLWRPRPQRNRLRVPIGLDADGRPLELDIKESAQGGMGPHGLCIGATGSGKSELLRTLVLALAMTHSPEVLNFVLVDFKGGATFLGMEGLRHVSAIITNLEEELPLVDRMYDALHGEMVRRQEHLRHSGNYASLRDYEKARMEGAPLPPMPTLFIVLDEFSELLSAKPDFAELFVMIGRLGRSLGVHLLLASQRLEEGKLRGLDTHLSYRIGLRTFSAMESRVVLGVPDAYELPPSPGNGYLKFATEPLVRFKAAYVSGPVDEEPQTRSEGPQIVRQVLPYLTDYIRPQVVEQPQPEQRAEENKSSESLFDVVVRQLAGHGPEPHQIWLPPLDVPPTLDELLPPLSPSAAHGYTADGWEWRGRLHAVVGLVDRPFDQRRDPYWLDLSGGAGHVGVAGGPQTGKSTMLRTLITSLALLHTPQEVQFYCLDFGGGTLAGLAELPHVGSVATRLDADRIRRTVAEVSALLEQREQEFTERGIDSMATYRRLRATGEYAGDGFGDVFLVVDNWLTLRQDYEALEDSITQLAARGLGYGIHVVLSSNKWSEFRTSIRDLLGTKLELRLGDPYESEVDRKKAANVPENRPGRGLTRDGYHFLTALPRIDGDTSAETLTEGIATTVKTIREAWHGPTAPPVRMLPNVLPAAQLPSAAESGTRIPIGIDEDSLSPVYLDFNTDPHFLVFGDTECGKSNLLRLITAGIIERYTPQQARLIFIDYSRSLLDVATTEHQIGYAASSTAASSLVRDIKGAMEARLPPPDLTPEQLRSRSWWTGAELFLVVDDYEMVATSDNPLRPLAELLPQARDIGLHLIIARSMGGAGRALYEPIIQRIKEMASPGLVMSGNKDEGILLGNVKPHKLPQGRGYFVERRSGTRLIQTAYRES.

The span at 1–11 shows a compositional bias: basic residues; that stretch reads MSTVLVRRKER. The disordered stretch occupies residues 1–21; that stretch reads MSTVLVRRKERRQPPQMPRGE. Residues 1 to 40 lie on the Cytoplasmic side of the membrane; sequence MSTVLVRRKERRQPPQMPRGEILLESPPELPEVVTNSFQN. Residues 41–61 traverse the membrane as a helical segment; the sequence is VLMYLPMAAGSAAMVFTFLNH. At 62 to 64 the chain is on the extracellular side; it reads RNT. The chain crosses the membrane as a helical span at residues 65 to 85; the sequence is LQLVAGGMFALSMFGMMFGQL. The Cytoplasmic portion of the chain corresponds to 86 to 1315; it reads SQQSGERKTK…RLIQTAYRES (1230 aa). 2 FtsK domains span residues 456 to 656 and 813 to 1004; these read GRPL…MESR and RDPY…YESE. 479–486 is an ATP binding site; the sequence is GATGSGKS. E593 is a catalytic residue. The interval 721-1315 is binds EsxB; that stretch reads RPQVVEQPQP…RLIQTAYRES (595 aa). Residues 834–839, T1031, 1119–1124, Q1293, and 1310–1311 contribute to the ATP site; these read QTGKST, ECGKSN, and TA. Positions 1099–1282 constitute a FtsK 3 domain; it reads LSPVYLDFNT…MSGNKDEGIL (184 aa).

The cytosolic domain can form homodimers. Binds EsxB, which leads to multimerization, however EsxA disassembles the multimers, possibly by making EccC-EsxA-EsxB trimers instead of EccC-EsxB-EsxB-EccC tetramers. Forms a complex with EsxA and EsxB, probably wholly mediated by EsxB.

It localises to the cell membrane. With respect to regulation, esxB binding to the third FtsK domain causes multimerization; a subsequent unknown step relieves the allosteric inhibition of linker 2 on FtsK domain 1, activating the ATPase activity; a mutant EsxB ('Ala-98') does not cause multimers to form. Its function is as follows. Part of the ESX specialized secretion system, which exports proteins from the cell including EsxA (ESAT-6) and EsxB (CFP-10). Has weak intrinsic ATPase activity; probably only the first FtsK domain can hydrolyze ATP. Might be the translocase subunit. The polypeptide is ESX secretion system protein EccC (Thermomonospora curvata (strain ATCC 19995 / DSM 43183 / JCM 3096 / KCTC 9072 / NBRC 15933 / NCIMB 10081 / Henssen B9)).